Here is a 113-residue protein sequence, read N- to C-terminus: Non-specific lipid-transfer protein (113 aa).

The N-terminal stretch at 1–24 (AQVMLMAVALVLMLAAVPRAAVAI) is a signal peptide. 4 disulfides stabilise this stretch: Cys26–Cys73, Cys36–Cys50, Cys51–Cys96, and Cys71–Cys110. Asp30 carries Cis-14-hydroxy-10,13-dioxo-7-heptadecenoic acid aspartate ester lipidation.

Belongs to the plant LTP family.

Plant non-specific lipid-transfer proteins transfer phospholipids as well as galactolipids across membranes. May play a role in wax or cutin deposition in the cell walls of expanding epidermal cells and certain secretory tissues. In Triticum aestivum (Wheat), this protein is Non-specific lipid-transfer protein.